The chain runs to 231 residues: Dephospho-CoA kinase (231 aa).

Positions 29–231 constitute a DPCK domain; sequence RVGLTGGIAS…IAGALRFDRR (203 aa). 37 to 42 serves as a coordination point for ATP; sequence ASGKST.

The protein belongs to the CoaE family.

Its subcellular location is the cytoplasm. The enzyme catalyses 3'-dephospho-CoA + ATP = ADP + CoA + H(+). It functions in the pathway cofactor biosynthesis; coenzyme A biosynthesis; CoA from (R)-pantothenate: step 5/5. Catalyzes the phosphorylation of the 3'-hydroxyl group of dephosphocoenzyme A to form coenzyme A. This chain is Dephospho-CoA kinase, found in Cutibacterium acnes (strain DSM 16379 / KPA171202) (Propionibacterium acnes).